The sequence spans 479 residues: Ribulose bisphosphate carboxylase large chain (479 aa).

Positions 1 to 2 (MS) are excised as a propeptide. 2 residues coordinate substrate: Asn-123 and Thr-173. The active-site Proton acceptor is the Lys-175. Position 177 (Lys-177) interacts with substrate. Positions 201, 203, and 204 each coordinate Mg(2+). Lys-201 carries the post-translational modification N6-carboxylysine. A Phosphoserine modification is found at Ser-208. The Proton acceptor role is filled by His-294. Residues Arg-295 and His-327 each contribute to the substrate site. Thr-330 is modified (phosphothreonine). Ser-379 lines the substrate pocket.

It belongs to the RuBisCO large chain family. Type I subfamily. As to quaternary structure, heterohexadecamer of 8 large chains and 8 small chains; disulfide-linked. The disulfide link is formed within the large subunit homodimers. Mg(2+) is required as a cofactor. Post-translationally, the disulfide bond which can form in the large chain dimeric partners within the hexadecamer appears to be associated with oxidative stress and protein turnover.

The protein resides in the plastid. The protein localises to the chloroplast. It catalyses the reaction 2 (2R)-3-phosphoglycerate + 2 H(+) = D-ribulose 1,5-bisphosphate + CO2 + H2O. The catalysed reaction is D-ribulose 1,5-bisphosphate + O2 = 2-phosphoglycolate + (2R)-3-phosphoglycerate + 2 H(+). In terms of biological role, ruBisCO catalyzes two reactions: the carboxylation of D-ribulose 1,5-bisphosphate, the primary event in carbon dioxide fixation, as well as the oxidative fragmentation of the pentose substrate in the photorespiration process. Both reactions occur simultaneously and in competition at the same active site. The sequence is that of Ribulose bisphosphate carboxylase large chain from Draba nemorosa (Woodland whitlowgrass).